A 110-amino-acid chain; its full sequence is Large ribosomal subunit protein uL22 (110 aa).

This sequence belongs to the universal ribosomal protein uL22 family. Part of the 50S ribosomal subunit.

In terms of biological role, this protein binds specifically to 23S rRNA; its binding is stimulated by other ribosomal proteins, e.g. L4, L17, and L20. It is important during the early stages of 50S assembly. It makes multiple contacts with different domains of the 23S rRNA in the assembled 50S subunit and ribosome. Functionally, the globular domain of the protein is located near the polypeptide exit tunnel on the outside of the subunit, while an extended beta-hairpin is found that lines the wall of the exit tunnel in the center of the 70S ribosome. This chain is Large ribosomal subunit protein uL22, found in Shewanella frigidimarina (strain NCIMB 400).